The following is a 139-amino-acid chain: Holo-[acyl-carrier-protein] synthase (139 aa).

2 residues coordinate Mg(2+): Asp-8 and Glu-57.

The protein belongs to the P-Pant transferase superfamily. AcpS family. Requires Mg(2+) as cofactor.

The protein resides in the cytoplasm. The enzyme catalyses apo-[ACP] + CoA = holo-[ACP] + adenosine 3',5'-bisphosphate + H(+). Functionally, transfers the 4'-phosphopantetheine moiety from coenzyme A to a Ser of acyl-carrier-protein. In Sinorhizobium fredii (strain NBRC 101917 / NGR234), this protein is Holo-[acyl-carrier-protein] synthase.